A 555-amino-acid chain; its full sequence is Pentatricopeptide repeat-containing protein At2g44880 (555 aa).

PPR repeat units follow at residues 41–75 (DSFL…TCFA), 77–111 (DNFT…GFCA), 112–142 (DMYV…MPHR), 143–173 (SEVS…MPHV), 175–205 (DVVI…MTHK), 206–240 (TVIT…NLVS), 241–267 (WNTM…MQAT), 273–307 (DDVT…KLDK), 308–342 (KVKV…QVAS), 343–370 (WNAM…MIEE), 373–407 (DEIT…GLNA), and 408–438 (KIEH…MPFE). A type E motif region spans residues 443-518 (ILSSFLSACG…EVGCSLIEIN (76 aa)). A type E(+) motif region spans residues 519–549 (YIVSEFISGDTTHPHRRSIHLVLGDLLMHMN).

It belongs to the PPR family. PCMP-E subfamily.

In Arabidopsis thaliana (Mouse-ear cress), this protein is Pentatricopeptide repeat-containing protein At2g44880 (PCMP-E9).